The chain runs to 903 residues: Chitin synthase 1 (903 aa).

The interval 1 to 154 is disordered; that stretch reads MDPRYGAQPQ…YQDQPQQGGG (154 aa). The span at 67 to 79 shows a compositional bias: polar residues; the sequence is DHLNLNAAQSVDN. A glycan (N-linked (GlcNAc...) asparagine) is linked at N79. Over residues 100-117 the composition is skewed to low complexity; that stretch reads YYNQPYEPRPQQQPYDQG. The segment covering 135-150 has biased composition (polar residues); it reads HQPSDAPSEPYQDQPQ. Transmembrane regions (helical) follow at residues 444-464, 543-563, 573-593, 619-639, 654-674, 700-720, 729-749, 828-848, and 875-895; these read SAFG…YVAL, RWLN…LDFL, FAFF…WFAI, ILGV…FVLS, MCWF…FIAV, MLII…LIML, LVQY…YAFC, GVVL…LSSA, and IVLW…MWFL.

It belongs to the chitin synthase family. Class I subfamily.

It is found in the cell membrane. The catalysed reaction is [(1-&gt;4)-N-acetyl-beta-D-glucosaminyl](n) + UDP-N-acetyl-alpha-D-glucosamine = [(1-&gt;4)-N-acetyl-beta-D-glucosaminyl](n+1) + UDP + H(+). Its function is as follows. Polymerizes chitin, a structural polymer of the cell wall and septum, by transferring the sugar moiety of UDP-GlcNAc to the non-reducing end of the growing chitin polymer. Plays an important role in nuclear sorting or distribution. In Fusarium oxysporum f. sp. lycopersici (strain 4287 / CBS 123668 / FGSC 9935 / NRRL 34936) (Fusarium vascular wilt of tomato), this protein is Chitin synthase 1.